The sequence spans 899 residues: Protein suppressor of hairy wing (899 aa).

Disordered stretches follow at residues 1 to 33 (MSAQ…RTGT), 45 to 127 (AAVA…KKMD), and 171 to 206 (AKEN…AKRR). A compositionally biased stretch (basic and acidic residues) spans 21–31 (SDGDKPKEKRT). The segment covering 45–55 (AAVASKGASVS) has biased composition (low complexity). 2 stretches are compositionally biased toward polar residues: residues 67-83 (KILN…STKG) and 102-111 (RSSAPASSAV). The span at 183 to 198 (VDEDDDDDDDDEDEGV) shows a compositional bias: acidic residues. The segment at 218-240 (HVCGKCYKTFRRVKSLKKHLEFC) adopts a C2H2-type 1; atypical zinc-finger fold. The segment at 288–311 (INCPDCPKSFKTQTSYERHIFITH) adopts a C2H2-type 2 zinc-finger fold. Residues 318-340 (YPCSICNAKLRSGALLKLHEQQH) form a C2H2-type 3; atypical zinc finger. 9 C2H2-type zinc fingers span residues 347 to 365 (FACK…LKCH), 379 to 401 (MSCK…LKQH), 412 to 434 (YMCH…IRTH), 440 to 462 (FDCD…RRYH), 468 to 490 (YTCT…MKRH), 496 to 518 (HKCN…SKTH), 522 to 544 (YACS…VKDH), 552 to 576 (FACT…AGDH), and 594 to 617 (TDCA…RSVH). 3 disordered regions span residues 646–665 (EQKE…GSLI), 702–734 (PLEG…VVKK), and 865–899 (GDED…ESEA). The span at 874–899 (ETDKGKDREADNTDTDTREDAVESEA) shows a compositional bias: basic and acidic residues.

It localises to the nucleus. In terms of biological role, component of the gypsy chromatin insulator complex which is required for the function of the gypsy chromatin insulator and other endogenous chromatin insulators. Chromatin insulators are regulatory elements which establish independent domains of transcriptional activity within eukaryotic genomes. Insulators have two defining properties; they can block the communication between an enhancer and a promoter when placed between them and can also buffer transgenes from position effect variegation (PEV). Insulators are proposed to structure the chromatin fiber into independent domains of differing transcriptional potential by promoting the formation of distinct chromatin loops. This chromatin looping may involve the formation of insulator bodies, where homotypic interactions between individual subunits of the insulator complex could promote the clustering of widely spaced insulators at the nuclear periphery. Within the gypsy insulator complex, this protein binds specifically to a region of the gypsy element located 3' of the 5' long terminal repeat (LTR), and may also mediate interaction with other endogenous insulators at sites distinct from those recognized by Cp190. Cooperates with pita and cliff to recruit Cp190 and regulate insulator function at the front-ultraabdominal (Fub) boundary. The protein is Protein suppressor of hairy wing (su(Hw)) of Drosophila virilis (Fruit fly).